A 217-amino-acid polypeptide reads, in one-letter code: Large ribosomal subunit protein uL4c (217 aa).

Residues 51–85 form a disordered region; that stretch reads HRNRNAHTQTRGEVSGGGRKPWKQKGTGRARAGSN.

The protein belongs to the universal ribosomal protein uL4 family. As to quaternary structure, part of the 50S ribosomal subunit.

It is found in the plastid. The protein localises to the chloroplast. Its function is as follows. Probably binds the 23S rRNA. The sequence is that of Large ribosomal subunit protein uL4c (rpl4) from Gracilaria tenuistipitata var. liui (Red alga).